A 222-amino-acid polypeptide reads, in one-letter code: MGQKVHPKGLRIGIIKDWDAKWFADKKHYQELLHEDLKIRKYIKTKFYQAGISRIVIERASNRVKVTIHTARPGMVIGKGGTEIEVLRKELEKMTGKQININIAEIKVPEIDAQLVAENIAAQIEKRISYKRAMKQAVSRALKMGAQGIKVACSGRLAGAEIARSEWYSEGKVPLTTLRADIDYGFAEALTTYGKIGVKVWIYKGEVLPEVKKESVSTEGGE.

The KH type-2 domain maps to 39–107; it reads IRKYIKTKFY…QININIAEIK (69 aa).

It belongs to the universal ribosomal protein uS3 family. Part of the 30S ribosomal subunit. Forms a tight complex with proteins S10 and S14.

Functionally, binds the lower part of the 30S subunit head. Binds mRNA in the 70S ribosome, positioning it for translation. The protein is Small ribosomal subunit protein uS3 of Carboxydothermus hydrogenoformans (strain ATCC BAA-161 / DSM 6008 / Z-2901).